A 149-amino-acid chain; its full sequence is Large ribosomal subunit protein bL9 (149 aa).

The protein belongs to the bacterial ribosomal protein bL9 family.

Functionally, binds to the 23S rRNA. This is Large ribosomal subunit protein bL9 from Thermotoga maritima (strain ATCC 43589 / DSM 3109 / JCM 10099 / NBRC 100826 / MSB8).